Reading from the N-terminus, the 414-residue chain is Serine/threonine transporter SstT (414 aa).

Transmembrane regions (helical) follow at residues 22-42 (GLVL…TIGF), 54-74 (IFVK…VMAA), 89-109 (IIVL…IAGF), 148-168 (AIFK…GLAL), 189-209 (IVHV…AETL), 223-243 (LLAV…PILV), 305-325 (MAGA…TLGL), and 337-357 (IVAA…LLLI).

It belongs to the dicarboxylate/amino acid:cation symporter (DAACS) (TC 2.A.23) family.

The protein localises to the cell inner membrane. The catalysed reaction is L-serine(in) + Na(+)(in) = L-serine(out) + Na(+)(out). The enzyme catalyses L-threonine(in) + Na(+)(in) = L-threonine(out) + Na(+)(out). Involved in the import of serine and threonine into the cell, with the concomitant import of sodium (symport system). The polypeptide is Serine/threonine transporter SstT (Haemophilus influenzae (strain PittEE)).